The primary structure comprises 373 residues: MDKANGAYKTALKAASAVAPAEKFPVFQATFDKNLKEGLSGPDAVGFAKKLDAFIQTSYLSTKAAEPKEKFDLFVLSLTEVLRFMAGAVKAPPASKFPAKPAPKVAAYTPAAPAGAAPKATTDEQKLIEKINVGFKAAVAAAAGVPAASKYKTFVATFGAASNKAFAEALSTEPKGAAVASSKAVLTSKLDAAYKLAYKSAEGATPEAKYDAYVATLSEALRIIAGTLEVHGVKPAAEEVKAIPAGELQVIDKVDAAFKVAATAANAAPANDKFTVFEAAFNDAIKASTGGAYQSYKFIPALEAAVKQSYAATVATAPAVKYTVFETALKKAITAMSQAQKAAKPAAAVTGTATSAVGAATGAATAAAGGYKV.

Positions 1–28 (MDKANGAYKTALKAASAVAPAEKFPVFQ) are cleaved as a signal peptide.

This sequence belongs to the Poa p IX/Phl p VI allergen family. In terms of tissue distribution, pollen.

The chain is Pollen allergen KBG 31 from Poa pratensis (Kentucky bluegrass).